Consider the following 163-residue polypeptide: Protein-export protein SecB (163 aa).

This sequence belongs to the SecB family. Homotetramer, a dimer of dimers. One homotetramer interacts with 1 SecA dimer.

Its subcellular location is the cytoplasm. Its function is as follows. One of the proteins required for the normal export of preproteins out of the cell cytoplasm. It is a molecular chaperone that binds to a subset of precursor proteins, maintaining them in a translocation-competent state. It also specifically binds to its receptor SecA. The chain is Protein-export protein SecB from Pseudomonas aeruginosa (strain LESB58).